A 98-amino-acid chain; its full sequence is NADH-ubiquinone oxidoreductase chain 4L (98 aa).

3 consecutive transmembrane segments (helical) span residues Met1–Phe21, Leu26–Leu46, and Met61–Ala81.

This sequence belongs to the complex I subunit 4L family.

Its subcellular location is the mitochondrion membrane. The catalysed reaction is a ubiquinone + NADH + 5 H(+)(in) = a ubiquinol + NAD(+) + 4 H(+)(out). Functionally, core subunit of the mitochondrial membrane respiratory chain NADH dehydrogenase (Complex I) which catalyzes electron transfer from NADH through the respiratory chain, using ubiquinone as an electron acceptor. Part of the enzyme membrane arm which is embedded in the lipid bilayer and involved in proton translocation. The polypeptide is NADH-ubiquinone oxidoreductase chain 4L (MT-ND4L) (Squalus acanthias (Spiny dogfish)).